The primary structure comprises 509 residues: Cytochrome P450 monooxygenase LUC2 (509 aa).

Residues 30-50 form a helical membrane-spanning segment; sequence TKVLVTFLTIVIIAPRVFTVI. Cysteine 456 provides a ligand contact to heme.

This sequence belongs to the cytochrome P450 family. Heme is required as a cofactor.

It localises to the membrane. It functions in the pathway mycotoxin biosynthesis. Cytochrome P450 monooxygenase; part of the gene cluster that mediates the biosynthesis of the mycotoxin lucilactaene and the lucilactaene-related compound NG-391 that act as cell cycle inhibitors with potent growth inhibitory activity against malarial parasites, moderate growth inhibitory activity against cancer cells, and no activity against bacteria and fungi. Within the pathway, LUC2 performs C-20 methyl group hydroxylation of several intermediates. LUC2 does not perform the full oxidation of the C-20 methyl group into carboxylic acid, which is a prerequisite for the final methylation step. The pathway begins with the hybrid PKS-NRPS synthetase LUC5 which is responsible for the condensation of one acetyl-coenzyme A (CoA) unit with six malonyl-CoA units and the amide linkage of the arising heptaketide and homoserine, subsequently releasing the first intermediate prelucilactaene B. Both the cytochrome P450 monooxygenase LUC2 and the hydrolase LUC6 function in parallel in modification of prelucilactaene B. LUC6 may catalyze the 2-pyrrolidone ring formation to form prelucilactaene C from prelucilactaene B, followed by C-15 hydroxylation by the same enzyme to give prelucilactaene D, which is then converted to prelucilactaene E by epoxidation, and finally to prelucilactaene F by cyclization. Prelucilactane D, prelucilactaene E, and prelucilactaene F can be converted to dihydrolucilactaene, NG391, and lucilactaene, respectively, via C-20 methyl group hydroxylation by the cytochrome P450 monooxygenase LUC2. However, LUC2, unlike FUS8 in fusarin C biosynthesis, is not enough for the full oxidation of the C-20 methyl group into carboxylic acid, which is a prerequisite for the final methylation step. The aldehyde dehydrogenase LUC3 is involved in the biosynthesis by further oxidation of the C-20 alcoholic analog prelucilactaene G into a carboxylic derivative. This unidentified carboxylic derivative may be converted to demethyllucilactaene. As the last step, the methyltransferase LUC1 methylates the hydroxyl group at C-21 of demethyllucilactaene to generate lucilactaene. The chain is Cytochrome P450 monooxygenase LUC2 from Fusarium sp.